We begin with the raw amino-acid sequence, 251 residues long: Hydroxyacylglutathione hydrolase (251 aa).

Residues His-55, His-57, Asp-59, His-60, His-112, Asp-131, and His-169 each coordinate Zn(2+).

This sequence belongs to the metallo-beta-lactamase superfamily. Glyoxalase II family. As to quaternary structure, monomer. It depends on Zn(2+) as a cofactor.

It catalyses the reaction an S-(2-hydroxyacyl)glutathione + H2O = a 2-hydroxy carboxylate + glutathione + H(+). Its pathway is secondary metabolite metabolism; methylglyoxal degradation; (R)-lactate from methylglyoxal: step 2/2. In terms of biological role, thiolesterase that catalyzes the hydrolysis of S-D-lactoyl-glutathione to form glutathione and D-lactic acid. In Erythrobacter litoralis (strain HTCC2594), this protein is Hydroxyacylglutathione hydrolase.